The sequence spans 456 residues: Outer membrane protein assembly factor BamB (456 aa).

The N-terminal stretch at M1 to S19 is a signal peptide. C20 carries the N-palmitoyl cysteine lipid modification. Residue C20 is the site of S-diacylglycerol cysteine attachment.

It belongs to the BamB family. Part of the Bam complex.

Its subcellular location is the cell outer membrane. Its function is as follows. Part of the outer membrane protein assembly complex, which is involved in assembly and insertion of beta-barrel proteins into the outer membrane. The protein is Outer membrane protein assembly factor BamB of Francisella tularensis subsp. tularensis (strain SCHU S4 / Schu 4).